A 101-amino-acid polypeptide reads, in one-letter code: Protein Tat (101 aa).

The interval 1-20 (MEVVDPNLDPWKHPGSQPET) is disordered. The tract at residues 1 to 24 (MEVVDPNLDPWKHPGSQPETPCNK) is interaction with human CREBBP. Residues 1-48 (MEVVDPNLDPWKHPGSQPETPCNKCYCKKCCFHCQLCFTRKGLGISYG) are transactivation. Residues cysteine 22, cysteine 25, and cysteine 27 each contribute to the Zn(2+) site. A cysteine-rich region spans residues 22–37 (CNKCYCKKCCFHCQLC). Lysine 28 is modified (N6-acetyllysine; by host PCAF). The Zn(2+) site is built by cysteine 30, histidine 33, cysteine 34, and cysteine 37. The core stretch occupies residues 38–48 (FTRKGLGISYG). A disordered region spans residues 47–101 (YGRKKRRQRRRTPQSGEVHQDPVSKQPLSQTRGDPKGPEESKKKVESKTKTDPSD). The segment covering 48–58 (GRKKRRQRRRT) has biased composition (basic residues). Residues 49–57 (RKKRRQRRR) carry the Nuclear localization signal, RNA-binding (TAR), and protein transduction motif. The interval 49 to 86 (RKKRRQRRRTPQSGEVHQDPVSKQPLSQTRGDPKGPEE) is interaction with the host capping enzyme RNGTT. Lysine 50 and lysine 51 each carry N6-acetyllysine; by host EP300 and GCN5L2. Asymmetric dimethylarginine; by host PRMT6 is present on residues arginine 52 and arginine 53. Lysine 71 participates in a covalent cross-link: Glycyl lysine isopeptide (Lys-Gly) (interchain with G-Cter in ubiquitin). The short motif at 78–80 (RGD) is the Cell attachment site element. Positions 79–101 (GDPKGPEESKKKVESKTKTDPSD) are enriched in basic and acidic residues.

This sequence belongs to the lentiviruses Tat family. In terms of assembly, interacts with host CCNT1. Associates with the P-TEFb complex composed at least of Tat, P-TEFb (CDK9 and CCNT1), TAR RNA, RNA Pol II. Recruits the HATs CREBBP, TAF1/TFIID, EP300, PCAF and GCN5L2. Interacts with host KAT5/Tip60; this interaction targets the latter to degradation. Interacts with the host deacetylase SIRT1. Interacts with host capping enzyme RNGTT; this interaction stimulates RNGTT. Binds to host KDR, and to the host integrins ITGAV/ITGB3 and ITGA5/ITGB1. Interacts with host KPNB1/importin beta-1 without previous binding to KPNA1/importin alpha-1. Interacts with EIF2AK2. Interacts with host nucleosome assembly protein NAP1L1; this interaction may be required for the transport of Tat within the nucleus, since the two proteins interact at the nuclear rim. Interacts with host C1QBP/SF2P32; this interaction involves lysine-acetylated Tat. Interacts with the host chemokine receptors CCR2, CCR3 and CXCR4. Interacts with host DPP4/CD26; this interaction may trigger an anti-proliferative effect. Interacts with host LDLR. Interacts with the host extracellular matrix metalloproteinase MMP1. Interacts with host PRMT6; this interaction mediates Tat's methylation. Interacts with, and is ubiquitinated by MDM2/Hdm2. Interacts with host PSMC3 and HTATIP2. Interacts with STAB1; this interaction may overcome SATB1-mediated repression of IL2 and IL2RA (interleukin) in T cells by binding to the same domain than HDAC1. Interacts (when acetylated) with human CDK13, thereby increasing HIV-1 mRNA splicing and promoting the production of the doubly spliced HIV-1 protein Nef. Interacts with host TBP; this interaction modulates the activity of transcriptional pre-initiation complex. Interacts with host RELA. Interacts with host PLSCR1; this interaction negatively regulates Tat transactivation activity by altering its subcellular distribution. In terms of processing, asymmetrical arginine methylation by host PRMT6 seems to diminish the transactivation capacity of Tat and affects the interaction with host CCNT1. Post-translationally, acetylation by EP300, CREBBP, GCN5L2/GCN5 and PCAF regulates the transactivation activity of Tat. EP300-mediated acetylation of Lys-50 promotes dissociation of Tat from the TAR RNA through the competitive binding to PCAF's bromodomain. In addition, the non-acetylated Tat's N-terminus can also interact with PCAF. PCAF-mediated acetylation of Lys-28 enhances Tat's binding to CCNT1. Lys-50 is deacetylated by SIRT1. Polyubiquitination by host MDM2 does not target Tat to degradation, but activates its transactivation function and fosters interaction with CCNT1 and TAR RNA. In terms of processing, phosphorylated by EIF2AK2 on serine and threonine residues adjacent to the basic region important for TAR RNA binding and function. Phosphorylation of Tat by EIF2AK2 is dependent on the prior activation of EIF2AK2 by dsRNA.

The protein localises to the host nucleus. The protein resides in the host nucleolus. It is found in the host cytoplasm. It localises to the secreted. In terms of biological role, transcriptional activator that increases RNA Pol II processivity, thereby increasing the level of full-length viral transcripts. Recognizes a hairpin structure at the 5'-LTR of the nascent viral mRNAs referred to as the transactivation responsive RNA element (TAR) and recruits the cyclin T1-CDK9 complex (P-TEFb complex) that will in turn hyperphosphorylate the RNA polymerase II to allow efficient elongation. The CDK9 component of P-TEFb and other Tat-activated kinases hyperphosphorylate the C-terminus of RNA Pol II that becomes stabilized and much more processive. Other factors such as HTATSF1/Tat-SF1, SUPT5H/SPT5, and HTATIP2 are also important for Tat's function. Besides its effect on RNA Pol II processivity, Tat induces chromatin remodeling of proviral genes by recruiting the histone acetyltransferases (HATs) CREBBP, EP300 and PCAF to the chromatin. This also contributes to the increase in proviral transcription rate, especially when the provirus integrates in transcriptionally silent region of the host genome. To ensure maximal activation of the LTR, Tat mediates nuclear translocation of NF-kappa-B by interacting with host RELA. Through its interaction with host TBP, Tat may also modulate transcription initiation. Tat can reactivate a latently infected cell by penetrating in it and transactivating its LTR promoter. In the cytoplasm, Tat is thought to act as a translational activator of HIV-1 mRNAs. Functionally, extracellular circulating Tat can be endocytosed by surrounding uninfected cells via the binding to several surface receptors such as CD26, CXCR4, heparan sulfate proteoglycans (HSPG) or LDLR. Neurons are rarely infected, but they internalize Tat via their LDLR. Through its interaction with nuclear HATs, Tat is potentially able to control the acetylation-dependent cellular gene expression. Modulates the expression of many cellular genes involved in cell survival, proliferation or in coding for cytokines or cytokine receptors. Tat plays a role in T-cell and neurons apoptosis. Tat induced neurotoxicity and apoptosis probably contribute to neuroAIDS. Circulating Tat also acts as a chemokine-like and/or growth factor-like molecule that binds to specific receptors on the surface of the cells, affecting many cellular pathways. In the vascular system, Tat binds to ITGAV/ITGB3 and ITGA5/ITGB1 integrins dimers at the surface of endothelial cells and competes with bFGF for heparin-binding sites, leading to an excess of soluble bFGF. This Homo sapiens (Human) protein is Protein Tat.